Consider the following 1055-residue polypeptide: Sodium/potassium exporting P-type ATPase 1 (1055 aa).

The Cytoplasmic portion of the chain corresponds to 1–73; the sequence is MTPSIGYVDE…GADEKISISK (73 aa). Residues 74 to 94 form a helical membrane-spanning segment; sequence ILAHQIFNAMVLVLIISLIIA. The Extracellular portion of the chain corresponds to 95-99; sequence LAIKD. A helical transmembrane segment spans residues 100 to 120; the sequence is WISGGVIGFVVFINIFVGFIQ. Residues 121–298 are Cytoplasmic-facing; sequence ELKAEKTMGS…TNVGTPLQRK (178 aa). A helical transmembrane segment spans residues 299–319; that stretch reads LSWLAILLFWVAVLFAIVVMA. Residues 320-328 are Extracellular-facing; that stretch reads SQEMRVNRN. Residues 329–349 traverse the membrane as a helical segment; sequence VAIYAICVALSMIPSSLVVVL. Over 350–789 the chain is Cytoplasmic; sequence TITMAIGAQV…RMSSNIQKFV (440 aa). Asp-385 serves as the catalytic 4-aspartylphosphate intermediate. Positions 385 and 387 each coordinate Mg(2+). Residues Thr-387, Glu-491, Lys-544, Arg-586, Thr-646, Gly-647, Asp-648, Arg-705, and Lys-711 each contribute to the ATP site. Asp-730 lines the Mg(2+) pocket. Asn-733 provides a ligand contact to ATP. Residues 790–810 form a helical membrane-spanning segment; sequence LQLLAENVAQALYLMIGLAFI. The Extracellular portion of the chain corresponds to 811 to 816; the sequence is DKSGYS. The helical transmembrane segment at 817 to 837 threads the bilayer; sequence VFPLSPVEVLWIIVVTSCFPA. Topologically, residues 838–866 are cytoplasmic; it reads MGLGQEKASHDILEQPPNATIFTWEVIID. A helical membrane pass occupies residues 867 to 887; the sequence is MIAYGFWMAVCCLVCFVCIVY. The Extracellular portion of the chain corresponds to 888–913; the sequence is GKGDGSLGENCNEGSDTGCNLVFRGR. A helical membrane pass occupies residues 914-934; sequence SGAFAAFTWCALLLAWECIHL. The Cytoplasmic portion of the chain corresponds to 935 to 962; sequence RLSFFKMRPELENPWWKQLAIDLWDNQF. The chain crosses the membrane as a helical span at residues 963–983; the sequence is LFWSVMGAIVSVFPVVYIPVI. The Extracellular segment spans residues 984-990; the sequence is NNKVFLH. The chain crosses the membrane as a helical span at residues 991–1011; the sequence is APIGYEWGLAVAFTILFLIGA. Residues 1012-1055 lie on the Cytoplasmic side of the membrane; it reads EGWKWFKRVYYRKSNANNPEYDLERNDPFKEYSSFSKSNTMEIV.

Belongs to the cation transport ATPase (P-type) (TC 3.A.3) family. Type IID subfamily. It depends on Mg(2+) as a cofactor. The active site is phosphorylated in presence of sodium or potassium and in conditions of higher pH. Not phosphorylated in presence of calcium ions.

The protein resides in the cell membrane. It carries out the reaction Na(+)(in) + ATP + H2O = Na(+)(out) + ADP + phosphate + H(+). It catalyses the reaction K(+)(in) + ATP + H2O = K(+)(out) + ADP + phosphate + H(+). Catalyzes the hydrolysis of ATP coupled with the export of sodium and potassium from the cell. May be an inefficient potassium exporter. May transport other cations such as lithium. Sodium/potassium efflux ATPases are involved in salt tolerance and maintaining the membrane potential across the plasma membrane in high salinity (Na+) or alkaline (K+) environments. This Schwanniomyces occidentalis (Yeast) protein is Sodium/potassium exporting P-type ATPase 1.